Consider the following 346-residue polypeptide: Senescence-specific cysteine protease SAG12 (346 aa).

The first 25 residues, 1–25, serve as a signal peptide directing secretion; sequence MALKHMQIFLFVAIFSSFCFSITLS. The N-linked (GlcNAc...) asparagine glycan is linked to asparagine 124. Cystine bridges form between cysteine 151–cysteine 192, cysteine 185–cysteine 225, and cysteine 283–cysteine 335. Cysteine 154 is a catalytic residue. Residue histidine 289 is part of the active site. Asparagine 301 carries N-linked (GlcNAc...) asparagine glycosylation. Residue asparagine 310 is part of the active site.

This sequence belongs to the peptidase C1 family. Found in senescent leaves, especially in senescence-associated vacuoles- (SAVs) containing cells (e.g. mesophyll and guard cells), and in senescencing ovules of unfertilised pistils.

It localises to the vacuole. In terms of biological role, cysteine protease that may have a developmental senescence specific cell death function during apoptosis, heavy metal detoxification, and hypersensitive response. The polypeptide is Senescence-specific cysteine protease SAG12 (Arabidopsis thaliana (Mouse-ear cress)).